The primary structure comprises 305 residues: Translation initiation factor eIF2B subunit alpha (305 aa).

The protein belongs to the eIF-2B alpha/beta/delta subunits family. Component of the translation initiation factor 2B (eIF2B) complex which is a heterodecamer of two sets of five different subunits: alpha, beta, gamma, delta and epsilon. Subunits alpha, beta and delta comprise a regulatory subcomplex and subunits epsilon and gamma comprise a catalytic subcomplex. Within the complex, the hexameric regulatory complex resides at the center, with the two heterodimeric catalytic subcomplexes bound on opposite sides.

It localises to the cytoplasm. It is found in the cytosol. Its activity is regulated as follows. Activated by the chemical integrated stress response (ISR) inhibitor ISRIB which stimulates guanine nucleotide exchange factor activity for both phosphorylated and unphosphorylated eIF2. Acts as a component of the translation initiation factor 2B (eIF2B) complex, which catalyzes the exchange of GDP for GTP on eukaryotic initiation factor 2 (eIF2) gamma subunit. Its guanine nucleotide exchange factor activity is repressed when bound to eIF2 complex phosphorylated on the alpha subunit, thereby limiting the amount of methionyl-initiator methionine tRNA available to the ribosome and consequently global translation is repressed. In Bos taurus (Bovine), this protein is Translation initiation factor eIF2B subunit alpha (EIF2B1).